Reading from the N-terminus, the 486-residue chain is Galactose-3-O-sulfotransferase 4 (486 aa).

Topologically, residues methionine 1–leucine 18 are cytoplasmic. The helical; Signal-anchor for type II membrane protein transmembrane segment at glycine 19–phenylalanine 39 threads the bilayer. Over glutamine 40–proline 486 the chain is Lumenal. Asparagine 374 is a glycosylation site (N-linked (GlcNAc...) asparagine).

This sequence belongs to the galactose-3-O-sulfotransferase family. Mn(2+) is required as a cofactor. Expressed mainly in placenta, thymus, testis, ovary, spinal cord, trachea and adrenal gland and at low levels in brain, lung, spleen, prostate, small intestine, colon, stomach thyroid and lymph node.

It localises to the golgi apparatus. The protein localises to the golgi stack membrane. It functions in the pathway protein modification; carbohydrate sulfation. Its function is as follows. Catalyzes the transfer of sulfate to beta-1,3-linked galactose residues in O-linked glycoproteins. Good substrates include asialofetuin, Gal-beta-1,3-GalNAc and Gal-beta-1,3 (GlcNAc-beta-1,6)GalNAc. In Homo sapiens (Human), this protein is Galactose-3-O-sulfotransferase 4 (GAL3ST4).